Reading from the N-terminus, the 397-residue chain is Methylthioribose kinase (397 aa).

Residues Asn-43, Lys-60, and 114–116 (EDL) each bind ATP. Asp-232 lines the substrate pocket. Residue 249–251 (DPE) coordinates ATP. Arg-340 provides a ligand contact to substrate.

It belongs to the methylthioribose kinase family. Homodimer.

It catalyses the reaction 5-(methylsulfanyl)-D-ribose + ATP = 5-(methylsulfanyl)-alpha-D-ribose 1-phosphate + ADP + H(+). It participates in amino-acid biosynthesis; L-methionine biosynthesis via salvage pathway; S-methyl-5-thio-alpha-D-ribose 1-phosphate from S-methyl-5'-thioadenosine (hydrolase route): step 2/2. In terms of biological role, catalyzes the phosphorylation of methylthioribose into methylthioribose-1-phosphate. This Bacillus pumilus (strain SAFR-032) protein is Methylthioribose kinase.